Consider the following 461-residue polypeptide: Tubulin gamma-2 chain (461 aa).

142–148 lines the GTP pocket; the sequence is AGGTGSG.

This sequence belongs to the tubulin family.

It localises to the cytoplasm. It is found in the cytoskeleton. The protein resides in the microtubule organizing center. Its subcellular location is the centrosome. In terms of biological role, tubulin is the major constituent of microtubules. The gamma chain is found at microtubule organizing centers (MTOC) such as the spindle poles or the centrosome, suggesting that it is involved in the minus-end nucleation of microtubule assembly. In Euplotoides octocarinatus (Freshwater ciliate), this protein is Tubulin gamma-2 chain.